The following is a 106-amino-acid chain: Ribonuclease P protein component 4 (106 aa).

Positions 57, 60, 83, and 86 each coordinate Zn(2+).

Belongs to the eukaryotic/archaeal RNase P protein component 4 family. In terms of assembly, consists of a catalytic RNA component and at least 4-5 protein subunits. Requires Zn(2+) as cofactor.

It localises to the cytoplasm. The enzyme catalyses Endonucleolytic cleavage of RNA, removing 5'-extranucleotides from tRNA precursor.. Its function is as follows. Part of ribonuclease P, a protein complex that generates mature tRNA molecules by cleaving their 5'-ends. In Saccharolobus solfataricus (strain ATCC 35092 / DSM 1617 / JCM 11322 / P2) (Sulfolobus solfataricus), this protein is Ribonuclease P protein component 4.